We begin with the raw amino-acid sequence, 665 residues long: Protein Fe65 homolog (665 aa).

Positions 1-12 are enriched in basic and acidic residues; the sequence is MREGTPRVRIEV. Disordered regions lie at residues 1–43 and 90–111; these read MREG…DTAT and SRGY…RRRN. Positions 14-24 are enriched in polar residues; that stretch reads KGSNRPSQFVS. Basic and acidic residues-rich tracts occupy residues 27–40 and 102–111; these read EEQR…RDSD and GRREEERRRN. The WW domain occupies 233–266; the sequence is KDLPPGWEKHEDPQGYSYYWHVDSGTIQRQPPPP. PID domains lie at 330–456 and 499–615; these read VRFA…RDIC and FLGV…VLDA.

In terms of assembly, interacts (via PID 2 domain) with apl-1 (via cytoplasmic domain). Post-translationally, phosphorylated. As to expression, expressed in the pharynx (including pharyngeal muscle and nerve cells), ventral nerve cord and tail neurons.

The protein resides in the cytoplasm. The protein localises to the cytoskeleton. Modulates pharyngeal pumping activity, at least in part by regulating expression of the acetylcholinesterase genes ace-1 and ace-2. In Caenorhabditis elegans, this protein is Protein Fe65 homolog.